Reading from the N-terminus, the 530-residue chain is Serendipity locus protein alpha (530 aa).

In terms of tissue distribution, transient expression in blastoderm from nuclear cycle 11 to the onset of gastrulation.

Its subcellular location is the cytoplasm. It localises to the cell membrane. Its function is as follows. Required for the cellularization of the syncytial blastoderm embryo. Involved in the localization of the actin filaments just prior to and during plasma membrane invagination. Sry-alpha together with nullo and bnk may provide auxiliary functions, by acting both to stabilize a large and dynamic microfilament structure and regulate its functions. This chain is Serendipity locus protein alpha (Sry-alpha), found in Drosophila melanogaster (Fruit fly).